The sequence spans 688 residues: Glycine--tRNA ligase beta subunit (688 aa).

The protein belongs to the class-II aminoacyl-tRNA synthetase family. In terms of assembly, tetramer of two alpha and two beta subunits.

The protein localises to the cytoplasm. It carries out the reaction tRNA(Gly) + glycine + ATP = glycyl-tRNA(Gly) + AMP + diphosphate. The polypeptide is Glycine--tRNA ligase beta subunit (Listeria monocytogenes serotype 4b (strain CLIP80459)).